Consider the following 141-residue polypeptide: ATP synthase epsilon chain (141 aa).

Belongs to the ATPase epsilon chain family. F-type ATPases have 2 components, CF(1) - the catalytic core - and CF(0) - the membrane proton channel. CF(1) has five subunits: alpha(3), beta(3), gamma(1), delta(1), epsilon(1). CF(0) has three main subunits: a, b and c.

It is found in the cell membrane. Functionally, produces ATP from ADP in the presence of a proton gradient across the membrane. This Mycoplasmopsis pulmonis (strain UAB CTIP) (Mycoplasma pulmonis) protein is ATP synthase epsilon chain (atpC).